Here is a 251-residue protein sequence, read N- to C-terminus: Putative glutathione-independent glyoxalase hsp3105 (251 aa).

Belongs to the peptidase C56 family. HSP31-like subfamily.

The protein localises to the cytoplasm. Its subcellular location is the nucleus. The enzyme catalyses methylglyoxal + H2O = (R)-lactate + H(+). Its function is as follows. May catalyze the conversion of methylglyoxal (MG) to D-lactate in a single glutathione (GSH)-independent step. May play a role in detoxifying endogenously produced glyoxals. Involved in protection against reactive oxygen species (ROS). The polypeptide is Putative glutathione-independent glyoxalase hsp3105 (Schizosaccharomyces pombe (strain 972 / ATCC 24843) (Fission yeast)).